The following is a 256-amino-acid chain: Uridylate kinase (256 aa).

K10–G13 is a binding site for ATP. G52 serves as a coordination point for UMP. ATP is bound by residues G53 and R57. Residues D72 and N134–T141 each bind UMP. ATP contacts are provided by Y168 and D171.

This sequence belongs to the UMP kinase family. Homohexamer.

It is found in the cytoplasm. The enzyme catalyses UMP + ATP = UDP + ADP. It participates in pyrimidine metabolism; CTP biosynthesis via de novo pathway; UDP from UMP (UMPK route): step 1/1. Inhibited by UTP. Catalyzes the reversible phosphorylation of UMP to UDP. The polypeptide is Uridylate kinase (Frankia alni (strain DSM 45986 / CECT 9034 / ACN14a)).